Reading from the N-terminus, the 1155-residue chain is Agglutinin-like protein 3 (1155 aa).

The signal sequence occupies residues 1 to 17; the sequence is MLQQYTLLLIYLSVATA. 4 disulfide bridges follow: Cys73–Cys150, Cys96–Cys112, Cys205–Cys298, and Cys227–Cys256. ALS repeat units lie at residues 365 to 396, 401 to 432, and 438 to 469; these read TTIT…VDIP, TTVT…VQVP, and VTTT…IREP. The N-linked (GlcNAc...) asparagine glycan is linked to Asn471. 2 ALS repeats span residues 474-505 and 510-541; these read VTTT…IKEP and VTTT…IREP. Residue Asn543 is glycosylated (N-linked (GlcNAc...) asparagine). ALS repeat units lie at residues 546-577 and 582-613; these read VTTT…IREP. N-linked (GlcNAc...) asparagine glycosylation occurs at Asn615. The stretch at 618–649 is one ALS 8 repeat; that stretch reads VTTTEYWSQSYATTTTITAPPGETDTVLIREP. Asn651 carries an N-linked (GlcNAc...) asparagine glycan. ALS repeat units follow at residues 654-685 and 690-721; these read VTTT…IKEP and VTTT…IREP. Asn723 carries N-linked (GlcNAc...) asparagine glycosylation. Residues 726-757 form an ALS 11 repeat; that stretch reads VTTTEYWSQSYATTTTITAPPGETDTVLIREP. A glycan (N-linked (GlcNAc...) asparagine) is linked at Asn759. Residues 762–793 form an ALS 12 repeat; that stretch reads VTTTEYWSQSFATTTTVTAPPGGTDTVIIREP. Asn795 carries an N-linked (GlcNAc...) asparagine glycan. 2 ALS repeats span residues 798 to 829 and 834 to 863; these read VTTT…IREP and VTTT…VIIY. N-linked (GlcNAc...) asparagine glycosylation occurs at Asn881. The interval 936–1115 is disordered; that stretch reads TTTESTLQSP…NSDTQQTTLS (180 aa). Low complexity predominate over residues 949–965; that stretch reads FSESGVSVETESSTFTT. Residues 966-977 show a composition bias toward polar residues; that stretch reads AQTNPSVPTTES. The span at 1010–1019 shows a compositional bias: low complexity; sequence TTSTAASTST. Asn1023 is a glycosylation site (N-linked (GlcNAc...) asparagine). Composition is skewed to low complexity over residues 1034–1058 and 1071–1115; these read ASSP…STSV and APSA…TTLS. Asn1099 carries an N-linked (GlcNAc...) asparagine glycan. Ser1134 carries GPI-anchor amidated serine lipidation. Residues 1135-1155 constitute a propeptide, removed in mature form; that stretch reads GSVIQHSTWLCGLITLLSLFI.

This sequence belongs to the ALS family. The GPI-anchor is attached to the protein in the endoplasmic reticulum and serves to target the protein to the cell surface. There, the glucosamine-inositol phospholipid moiety is cleaved off and the GPI-modified mannoprotein is covalently attached via its lipidless GPI glycan remnant to the 1,6-beta-glucan of the outer cell wall layer.

The protein localises to the cell membrane. The protein resides in the secreted. It localises to the cell wall. Cell surface adhesion protein which mediates both yeast-to-host tissue adherence and yeast aggregation. Plays an important role in the biofilm formation and pathogenesis of C.albicans infections. Necessary for C.albicans to bind to N-cadherin on endothelial cells and E-cadherin on oral epithelial cells and subsequent endocytosis by these cells. During disseminated infection, mediates initial trafficking to the brain and renal cortex and contributes to fungal persistence in the kidneys. The sequence is that of Agglutinin-like protein 3 (ALS3) from Candida albicans (strain SC5314 / ATCC MYA-2876) (Yeast).